Consider the following 192-residue polypeptide: Ion-translocating oxidoreductase complex subunit B (192 aa).

The segment at 1–26 (MNAIWIAVAAVSLLGLAFGAILGYAS) is hydrophobic. The region spanning 32–91 (EDDPVVEKIDEILPQSQCGQCGYPGCRPYAETISCNGEKINRCAPGGEAVMLKIAELLNV) is the 4Fe-4S domain. 12 residues coordinate [4Fe-4S] cluster: cysteine 49, cysteine 52, cysteine 57, cysteine 74, cysteine 117, cysteine 120, cysteine 123, cysteine 127, cysteine 147, cysteine 150, cysteine 153, and cysteine 157. 2 4Fe-4S ferredoxin-type domains span residues 108–137 (MVAV…GATR) and 138–167 (AMHT…LQPV).

Belongs to the 4Fe4S bacterial-type ferredoxin family. RnfB subfamily. In terms of assembly, the complex is composed of six subunits: RsxA, RsxB, RsxC, RsxD, RsxE and RsxG. Requires [4Fe-4S] cluster as cofactor.

It localises to the cell inner membrane. Functionally, part of a membrane-bound complex that couples electron transfer with translocation of ions across the membrane. Required to maintain the reduced state of SoxR. The protein is Ion-translocating oxidoreductase complex subunit B of Escherichia coli O6:K15:H31 (strain 536 / UPEC).